The chain runs to 528 residues: Major facilitator-type transporter psiT2 (528 aa).

The segment at 1 to 20 is disordered; the sequence is MSPERSASLEPDEHSSLLSD. Helical transmembrane passes span 87-107, 125-145, 148-168, 174-194, and 220-240; these read FYSG…IFML, LGVA…MMLV, VCAG…SELT, ALVV…GPLI, and FLPS…GYFF. The span at 260–270 shows a compositional bias: low complexity; it reads STSSISSRTST. Residues 260 to 299 form a disordered region; that stretch reads STSSISSRTSTLYGATDDHNRDASESTALSPEEAEDEIDS. 6 consecutive transmembrane segments (helical) span residues 322-342, 357-377, 388-408, 424-444, 460-479, and 493-513; these read FLMF…FTAV, AFSV…PWVL, FCMF…PLAQ, GLLY…VMAF, LATA…ALCP, and NILG…AGVW.

Belongs to the major facilitator superfamily. TCR/Tet family.

The protein localises to the membrane. Functionally, major facilitator-type transporter; part of the gene cluster that mediates the biosynthesis of psilocybin, a psychotropic tryptamine-derived natural product. The polypeptide is Major facilitator-type transporter psiT2 (Psilocybe cyanescens).